The following is a 401-amino-acid chain: Aspartokinase (401 aa).

The protein belongs to the aspartokinase family.

The catalysed reaction is L-aspartate + ATP = 4-phospho-L-aspartate + ADP. It functions in the pathway amino-acid biosynthesis; L-lysine biosynthesis via DAP pathway; (S)-tetrahydrodipicolinate from L-aspartate: step 1/4. It participates in amino-acid biosynthesis; L-methionine biosynthesis via de novo pathway; L-homoserine from L-aspartate: step 1/3. The protein operates within amino-acid biosynthesis; L-threonine biosynthesis; L-threonine from L-aspartate: step 1/5. This is Aspartokinase (lysC) from Rickettsia felis (strain ATCC VR-1525 / URRWXCal2) (Rickettsia azadi).